The primary structure comprises 307 residues: Quinolinate synthase (307 aa).

Residues His20 and Ser37 each coordinate iminosuccinate. Cys82 lines the [4Fe-4S] cluster pocket. Residues 108-110 (YIN) and Ser125 each bind iminosuccinate. Cys168 lines the [4Fe-4S] cluster pocket. Residues 194-196 (HPE) and Thr219 contribute to the iminosuccinate site. Cys264 contacts [4Fe-4S] cluster.

Belongs to the quinolinate synthase family. Type 2 subfamily. Requires [4Fe-4S] cluster as cofactor.

The protein resides in the cytoplasm. It carries out the reaction iminosuccinate + dihydroxyacetone phosphate = quinolinate + phosphate + 2 H2O + H(+). The protein operates within cofactor biosynthesis; NAD(+) biosynthesis; quinolinate from iminoaspartate: step 1/1. Its function is as follows. Catalyzes the condensation of iminoaspartate with dihydroxyacetone phosphate to form quinolinate. The chain is Quinolinate synthase from Pyrobaculum aerophilum (strain ATCC 51768 / DSM 7523 / JCM 9630 / CIP 104966 / NBRC 100827 / IM2).